The sequence spans 128 residues: Large ribosomal subunit protein bL20 (128 aa).

It belongs to the bacterial ribosomal protein bL20 family.

Its function is as follows. Binds directly to 23S ribosomal RNA and is necessary for the in vitro assembly process of the 50S ribosomal subunit. It is not involved in the protein synthesizing functions of that subunit. This Micrococcus luteus (strain ATCC 4698 / DSM 20030 / JCM 1464 / CCM 169 / CCUG 5858 / IAM 1056 / NBRC 3333 / NCIMB 9278 / NCTC 2665 / VKM Ac-2230) (Micrococcus lysodeikticus) protein is Large ribosomal subunit protein bL20.